The following is a 392-amino-acid chain: Phosphoglycerate kinase (392 aa).

Substrate contacts are provided by residues 26-28 (DLN), Arg41, 64-67 (HLGR), Arg118, and Arg151. ATP-binding positions include Lys202, Glu319, and 345 to 348 (GGDT).

The protein belongs to the phosphoglycerate kinase family. As to quaternary structure, monomer.

Its subcellular location is the cytoplasm. The enzyme catalyses (2R)-3-phosphoglycerate + ATP = (2R)-3-phospho-glyceroyl phosphate + ADP. Its pathway is carbohydrate degradation; glycolysis; pyruvate from D-glyceraldehyde 3-phosphate: step 2/5. This Photobacterium profundum (strain SS9) protein is Phosphoglycerate kinase.